Reading from the N-terminus, the 661-residue chain is Zeaxanthin epoxidase, chloroplastic (661 aa).

The transit peptide at 1–50 (MASTLFYNSMNLSAAVFSRTHFPIPINKDFPLEFSPCIHTDYHLRSRTRS) directs the protein to the chloroplast. FAD contacts are provided by residues 82 to 110 (RILVAGGGIGGLVFALAAKKKGFDVVVFE) and 360 to 373 (ILTWGKGHVTLLGD). The FHA domain occupies 558-607 (CIIGSAPHGDVSGISIAIPKPQVSEMHARISYKDGAFYLTDLRSEHGTWI).

It depends on FAD as a cofactor.

The protein localises to the plastid. Its subcellular location is the chloroplast. It carries out the reaction all-trans-zeaxanthin + 4 reduced [2Fe-2S]-[ferredoxin] + 2 O2 + 4 H(+) = all-trans-violaxanthin + 4 oxidized [2Fe-2S]-[ferredoxin] + 2 H2O. Its pathway is plant hormone biosynthesis; abscisate biosynthesis. In terms of biological role, converts zeaxanthin into antheraxanthin and subsequently violaxanthin. Involved in the epoxidation of zeaxanthin. The chain is Zeaxanthin epoxidase, chloroplastic from Prunus armeniaca (Apricot).